The chain runs to 252 residues: Proteasome subunit alpha 1 (252 aa).

Position 1 is an N-acetylmethionine; alternate (Met1).

It belongs to the peptidase T1A family. In terms of assembly, the 20S proteasome core is composed of 14 alpha and 14 beta subunits that assemble into four stacked heptameric rings, resulting in a barrel-shaped structure. The two inner rings, each composed of seven catalytic beta subunits, are sandwiched by two outer rings, each composed of seven alpha subunits. H.volcanii produces at least 2 types of 20S proteasomes: an alpha1-beta proteasome and a proteasome containing all three subunits (alpha1, alpha2, and beta) that appears to be asymmetrical with homo-oligomeric alpha1 and alpha2 rings positioned on separate ends. The catalytic chamber with the active sites is on the inside of the barrel. Has probably a gated structure, the ends of the cylinder being occluded by the N-termini of the alpha-subunits. Is likely capped at one or both ends by the proteasome regulatory ATPase, PAN. In terms of processing, acetylated. The acetylated form at Met-1 was shown to be in 100-fold excess of the unacetylated form with the initiator methionine removed in whole cells and purified 20S proteasomes.

Its subcellular location is the cytoplasm. With respect to regulation, the formation of the proteasomal ATPase PAN-20S proteasome complex, via the docking of the C-termini of PAN into the intersubunit pockets in the alpha-rings, triggers opening of the gate for substrate entry. Interconversion between the open-gate and close-gate conformations leads to a dynamic regulation of the 20S proteasome proteolysis activity. In vitro, the chymotrypsin-like activity of the alpha1-beta proteasome is potently inhibited by carbobenzoxyl-leucinyl-leucinyl-leucinal-H (MG132) and significantly by N-acetyl-leucinyl-leucinyl-norleucinal-H (calpain inhibitor I). Its function is as follows. Component of the proteasome core, a large protease complex with broad specificity involved in protein degradation. The H.volcanii alpha1-beta proteasome is able to cleave oligopeptides after Phe, Tyr and Trp, poorly after Glu but not after Arg. Thus, displays chymotrypsin-like activity, low caspase-like activity but no trypsin-like activity. The protein is Proteasome subunit alpha 1 of Haloferax volcanii (strain ATCC 29605 / DSM 3757 / JCM 8879 / NBRC 14742 / NCIMB 2012 / VKM B-1768 / DS2) (Halobacterium volcanii).